The primary structure comprises 156 residues: Ribosomal RNA large subunit methyltransferase H (156 aa).

S-adenosyl-L-methionine is bound by residues L73, G104, and L123–M128.

It belongs to the RNA methyltransferase RlmH family. Homodimer.

Its subcellular location is the cytoplasm. It catalyses the reaction pseudouridine(1915) in 23S rRNA + S-adenosyl-L-methionine = N(3)-methylpseudouridine(1915) in 23S rRNA + S-adenosyl-L-homocysteine + H(+). In terms of biological role, specifically methylates the pseudouridine at position 1915 (m3Psi1915) in 23S rRNA. The protein is Ribosomal RNA large subunit methyltransferase H of Tolumonas auensis (strain DSM 9187 / NBRC 110442 / TA 4).